The sequence spans 73 residues: Putative antimicrobial peptide clone 4 (73 aa).

The signal sequence occupies residues Met1–Ala22. Positions Asp45 to Tyr73 are excised as a propeptide.

It belongs to the non-disulfide-bridged peptide (NDBP) superfamily. Short antimicrobial peptide (group 4) family. As to expression, expressed by the venom gland.

The protein resides in the secreted. Antimicrobial peptide. Has a high antibacterial activity against the Gram-positive bacterium S.aureus (MIC=5-17.30 uM), the methicillin-resistant S.aureus (MRSA) (MIC=17.30 uM), and E.faecalis (MIC=69.23 uM). Has antifungal activity against Candida spp. and one Cryptococcus neoformans strains with MICs values ranging from 6.25 to 100 uM. Also shows an inhibitory activity on C.albicans biofilms at high concentrations. Has a moderate hemolytic potency (18% at 20 uM). Also inhibits the growth of the five cancer cell lines tested. In the model of polymicrobial sepsis, it exhibits an antibiotic effect, reducing the levels of microorganisms in the infectious focus and the inflammatory responses in the lung and cecum of septic animals. The chain is Putative antimicrobial peptide clone 4 from Tityus costatus (Brazilian scorpion).